The following is a 462-amino-acid chain: Receptor like protein 29 (462 aa).

The signal sequence occupies residues 1-26 (MTMKRALPSPSSLLFFFLLITPLFLC). At 27-441 (QENRVSASMP…SQASRYYRSC (415 aa)) the chain is on the extracellular side. N-linked (GlcNAc...) asparagine glycosylation occurs at Asn139. LRR repeat units lie at residues 139 to 164 (NSSLQQLSLRSNPSLSGQIPPRISSL), 165 to 188 (KSLQILTLSQNRLTGDIPPAIFSL), 190 to 212 (SLVHLDLSYNKLTGKIPLQLGNL), 213 to 236 (NNLVGLDLSYNSLTGTIPPTISQL), 238 to 260 (MLQKLDLSSNSLFGRIPEGVEKL), 261 to 284 (RSLSFMALSNNKLKGAFPKGISNL), 286 to 308 (SLQYFIMDNNPMFVALPVELGFL), 309 to 331 (PKLQELQLENSGYSGVIPESYTK), 332 to 355 (LTNLSSLSLANNRLTGEIPSGFES), and 357 to 381 (PHVFHLNLSRNLLIGVVPFDSSFLR). 3 N-linked (GlcNAc...) asparagine glycosylation sites follow: Asn334, Asn363, and Asn416. Residues 442 to 462 (FFANALFPFALFLGLHQRWVL) form a helical membrane-spanning segment.

The protein belongs to the RLP family.

The protein resides in the cell membrane. In Arabidopsis thaliana (Mouse-ear cress), this protein is Receptor like protein 29.